A 237-amino-acid chain; its full sequence is Uridylate kinase (237 aa).

Residue 11-14 (KLSG) participates in ATP binding. G53 contributes to the UMP binding site. ATP is bound by residues G54 and R58. UMP contacts are provided by residues D73 and 134 to 141 (TGNPFFTT). 3 residues coordinate ATP: T161, Y167, and D170.

The protein belongs to the UMP kinase family. As to quaternary structure, homohexamer.

The protein localises to the cytoplasm. The catalysed reaction is UMP + ATP = UDP + ADP. It functions in the pathway pyrimidine metabolism; CTP biosynthesis via de novo pathway; UDP from UMP (UMPK route): step 1/1. Its activity is regulated as follows. Inhibited by UTP. Catalyzes the reversible phosphorylation of UMP to UDP. In Burkholderia thailandensis (strain ATCC 700388 / DSM 13276 / CCUG 48851 / CIP 106301 / E264), this protein is Uridylate kinase.